The chain runs to 620 residues: Glutathione-regulated potassium-efflux system protein KefC (620 aa).

Helical transmembrane passes span 4 to 24 (HTLI…PVAV), 26 to 46 (LGLG…PWGL), 54 to 74 (AILH…GLEL), 86 to 106 (VFGG…GFCV), 114 to 134 (VALL…MQAM), 149 to 169 (FAVL…IPLL), 178 to 198 (ASAF…VVLL), 218 to 238 (VFSA…EEAG), 271 to 291 (LLLG…TLVA), 296 to 316 (VLTL…LVAK), 326 to 346 (RWFA…FGAA), and 359 to 379 (ALTL…VLLT). The RCK N-terminal domain maps to 399–518 (QPRVIIAGFG…AGVAQPERET (120 aa)). Residues 596 to 620 (HGWQGTREGKHTGNDADEPEVKPQP) are disordered.

It belongs to the monovalent cation:proton antiporter 2 (CPA2) transporter (TC 2.A.37) family. KefC subfamily. As to quaternary structure, homodimer. Interacts with the regulatory subunit KefF.

The protein resides in the cell inner membrane. Its function is as follows. Pore-forming subunit of a potassium efflux system that confers protection against electrophiles. Catalyzes K(+)/H(+) antiport. This chain is Glutathione-regulated potassium-efflux system protein KefC, found in Cronobacter sakazakii (strain ATCC BAA-894) (Enterobacter sakazakii).